A 223-amino-acid chain; its full sequence is Small ribosomal subunit protein uS3 (223 aa).

In terms of domain architecture, KH type-2 spans 39-107 (VREFLHKKLA…PVQINIEEVR (69 aa)).

Belongs to the universal ribosomal protein uS3 family. In terms of assembly, part of the 30S ribosomal subunit. Forms a tight complex with proteins S10 and S14.

Functionally, binds the lower part of the 30S subunit head. Binds mRNA in the 70S ribosome, positioning it for translation. The protein is Small ribosomal subunit protein uS3 of Francisella tularensis subsp. mediasiatica (strain FSC147).